Here is a 208-residue protein sequence, read N- to C-terminus: Large ribosomal subunit protein bL25 (208 aa).

The protein belongs to the bacterial ribosomal protein bL25 family. CTC subfamily. As to quaternary structure, part of the 50S ribosomal subunit; part of the 5S rRNA/L5/L18/L25 subcomplex. Contacts the 5S rRNA. Binds to the 5S rRNA independently of L5 and L18.

Its function is as follows. This is one of the proteins that binds to the 5S RNA in the ribosome where it forms part of the central protuberance. In Burkholderia thailandensis (strain ATCC 700388 / DSM 13276 / CCUG 48851 / CIP 106301 / E264), this protein is Large ribosomal subunit protein bL25.